Consider the following 558-residue polypeptide: SPATS2-like protein (558 aa).

Position 2 is an N-acetylalanine (Ala2). Over residues 63–79 the composition is skewed to basic residues; the sequence is GKKKNNKRKRSKSKQHQ. The tract at residues 63–204 is disordered; sequence GKKKNNKRKR…SPVKSNAPAA (142 aa). Composition is skewed to basic and acidic residues over residues 80–92 and 110–142; these read GNKDAKDKVERPE and GCEKDSSSPDSTREKLALTPREKKISILEEPPR. The residue at position 120 (Ser120) is a Phosphoserine. Positions 279–344 form a coiled coil; the sequence is KEEAMDILTA…ARFSCDIEQL (66 aa). Disordered stretches follow at residues 385 to 406 and 421 to 514; these read GNFARKSSGHNKPSEGKAANPK and TMPT…RQHA. A compositionally biased stretch (polar residues) spans 421-433; sequence TMPTNKQQNGPSS. Basic residues predominate over residues 469 to 485; that stretch reads HEHRRQPHNGFRPKNKG.

Belongs to the SPATS2 family.

The protein localises to the cytoplasm. The protein resides in the nucleus. Its subcellular location is the nucleolus. This is SPATS2-like protein (Spats2l) from Mus musculus (Mouse).